A 140-amino-acid polypeptide reads, in one-letter code: Chorion class A protein Ld2/Ld41 (140 aa).

The signal sequence occupies residues 1–21 (MNSFALLLVCIQACLVQSVFS).

Belongs to the chorion protein family.

This protein is one of many from the eggshell of the gypsy moth. In Lymantria dispar (Gypsy moth), this protein is Chorion class A protein Ld2/Ld41.